Reading from the N-terminus, the 345-residue chain is Lysine-specific demethylase JMJ32 (345 aa).

The 194-residue stretch at 122-315 (GYLQQQNDCF…IKYAYFNFLQ (194 aa)) folds into the JmjC domain. Residues histidine 174, aspartate 176, and histidine 281 each contribute to the Fe cation site.

The protein belongs to the JARID1 histone demethylase family. Requires Fe(2+) as cofactor. As to expression, expressed ubiquitously including in vasculatures, leaves, siliques, roots and inflorescences. Present in the root meristem. Accumulates in cotyledons and root tips of young seedlings.

It is found in the nucleus. The protein localises to the cytoplasm. The protein resides in the endoplasmic reticulum. It catalyses the reaction N(6),N(6),N(6)-trimethyl-L-lysyl(27)-[histone H3] + 2-oxoglutarate + O2 = N(6),N(6)-dimethyl-L-lysyl(27)-[histone H3] + formaldehyde + succinate + CO2. The enzyme catalyses N(6),N(6)-dimethyl-L-lysyl(27)-[histone H3] + 2-oxoglutarate + O2 = N(6)-methyl-L-lysyl(27)-[histone H3] + formaldehyde + succinate + CO2. It carries out the reaction N(6),N(6),N(6)-trimethyl-L-lysyl(27)-[histone H3] + 2 2-oxoglutarate + 2 O2 = N(6)-methyl-L-lysyl(27)-[histone H3] + 2 formaldehyde + 2 succinate + 2 CO2. Functionally, histone demethylase that demethylates 'Lys-27' (H3K27me) of histone H3 with a specific activity for H3K27me3 and H3K27me2, and involved in the regulation of gene expression. No activity on H3K27me1. Together with JMJ30, regulates the flowering-repressor FLOWERING LOCUS C (FLC) locus by removing the repressive histone modification H3 lysine 27 trimethylation (H3K27me3), especially at elevated temperatures (e.g. 29 degrees Celsius), thus preventing extreme precocious flowering. JMJ30 and JMJ32 are regulators involved in the integration of abscisic acid (ABA) and brassinosteroids (BR) signaling pathways. Together with JMJ30, controls ABA-mediated growth arrest during the post-germination stage in unfavorable conditions, and responses to ABA during root development, via the removal of repressive histone mark (H3K27me3) from the SnRK2.8 promoter, thus promoting SnRK2.8 expression and subsequent kinase-dependent ABI3 activation. In addition, removes the repressive histone marks (H3K27me3) from the BZR1 locus in response to stress and ABA, thus activating the BR signaling pathway which, in turn, inhibits the ABA signaling pathway. The chain is Lysine-specific demethylase JMJ32 from Arabidopsis thaliana (Mouse-ear cress).